The sequence spans 153 residues: UPF0260 protein Plav_0898 (153 aa).

The protein belongs to the UPF0260 family.

The protein is UPF0260 protein Plav_0898 of Parvibaculum lavamentivorans (strain DS-1 / DSM 13023 / NCIMB 13966).